We begin with the raw amino-acid sequence, 351 residues long: CCN family member 3 (351 aa).

The first 21 residues, 1–21 (MSVFLRKQCLCLGFLLLHLLN), serve as a signal peptide directing secretion. One can recognise an IGFBP N-terminal domain in the interval 25–99 (ATLRCPSRCP…NNETGICMVP (75 aa)). Cystine bridges form between C29/C55, C33/C57, C37/C58, C44/C61, C69/C83, and C75/C96. N-linked (GlcNAc...) asparagine glycosylation occurs at N91. One can recognise a VWFC domain in the interval 102-168 (DNCVFDGVIY…GECCEKWTCG (67 aa)). Residues 199–244 (NCIEQTTEWSACSKSCGMGLSTRVTNRNLQCEMVKQTRLCMVRPCE) enclose the TSP type-1 domain. C238 is lipidated: S-palmitoyl cysteine. Disulfide bonds link C258–C295, C275–C309, C286–C325, C289–C327, and C294–C331. A CTCK domain is found at 258–332 (CLRTKKSLKS…GTCTCHSNCP (75 aa)). Residue N274 is glycosylated (N-linked (GlcNAc...) asparagine).

The protein belongs to the CCN family. As to quaternary structure, interacts with FBLN1. Interacts (via CTCK domain) with NOTCH1 (via the EGF-like repeat region). Interacts with GJA1/CX43. Interacts with ITGA5:ITGB1, ITGAV:ITGB3 and ITGAV:ITGB5. Interacts with ZDHHC22; the interaction may lead to CCN3 palmitoylation. May be palmitoylated on Cys-238, which is important for extracellular secretion. In terms of tissue distribution, widely expressed. Highly expressed in neurons of dorsal root ganglia and dorsal horn of the spinal cord (at protein level). Expressed in astrocytes (at protein level). In cartilage, dominantly expressed in the chondrocyte territorial matrix.

Its subcellular location is the secreted. The protein resides in the cytoplasm. The protein localises to the cell junction. It localises to the gap junction. In terms of biological role, immediate-early protein playing a role in various cellular processes including proliferation, adhesion, migration, differentiation and survival. Acts by binding to integrins or membrane receptors such as NOTCH1. Essential regulator of hematopoietic stem and progenitor cell function. Inhibits myogenic differentiation through the activation of Notch-signaling pathway. Inhibits vascular smooth muscle cells proliferation by increasing expression of cell-cycle regulators such as CDKN2B or CDKN1A independently of TGFB1 signaling. Ligand of integrins ITGAV:ITGB3 and ITGA5:ITGB1, acts directly upon endothelial cells to stimulate pro-angiogenic activities and induces angiogenesis. In endothelial cells, supports cell adhesion, induces directed cell migration (chemotaxis) and promotes cell survival. Also plays a role in cutaneous wound healing acting as integrin receptor ligand. Supports skin fibroblast adhesion through ITGA5:ITGB1 and ITGA6:ITGB1 and induces fibroblast chemotaxis through ITGAV:ITGB5. Seems to enhance bFGF-induced DNA synthesis in fibroblasts. Involved in bone regeneration as a negative regulator. Enhances the articular chondrocytic phenotype, whereas it repressed the one representing endochondral ossification. Impairs pancreatic beta-cell function, inhibits beta-cell proliferation and insulin secretion. Plays a role as negative regulator of endothelial pro-inflammatory activation reducing monocyte adhesion, its anti-inflammatory effects occur secondary to the inhibition of NF-kappaB signaling pathway. Contributes to the control and coordination of inflammatory processes in atherosclerosis. Attenuates inflammatory pain through regulation of IL1B- and TNF-induced MMP9, MMP2 and CCL2 expression. Inhibits MMP9 expression through ITGB1 engagement. Brain osteoanabolic hormone. During lactation, maintains the maternal skeleton and viability of offspring. The chain is CCN family member 3 (Ccn3) from Rattus norvegicus (Rat).